The following is a 203-amino-acid chain: Akirin-2 (203 aa).

Phosphoserine is present on residues S18 and S21. A Nuclear localization signal motif is present at residues 22 to 27 (PKRRRC). Residue S57 is modified to Phosphoserine. An SYVS motif motif is present at residues 200–203 (SYVS).

Belongs to the akirin family. Homodimer. Interacts with IPO9; the interaction is direct. Associates with 20S and 26S proteasomes. Interacts with SMARCD1; promoting SWI/SNF complex recruitment. Interacts with NFKBIZ. Interacts with YWHAB. Post-translationally, polyubiquitinated. Polyubiquitination is dependent of UBR5 that extends pre-ubiquitinated AKIRIN2. In terms of tissue distribution, widely expressed. Most abundant in the lung, followed by the skeletal muscle, heart, liver, fat, thymus, lymph node, small intestine, kidney and spleen. In skeletal muscle, expressed at higher level in fast extensor digitorum longus (EDL) and longissimus lumborum (LL) muscles than in slow soleus (SOL) muscles.

It localises to the nucleus. The protein resides in the cytoplasm. It is found in the membrane. In terms of biological role, molecular adapter that acts as a bridge between a variety of multiprotein complexes, and which is involved in embryonic development, immunity, myogenesis and brain development. Plays a key role in nuclear protein degradation by promoting import of proteasomes into the nucleus: directly binds to fully assembled 20S proteasomes at one end and to nuclear import receptor IPO9 at the other end, bridging them together and mediating the import of pre-assembled proteasome complexes through the nuclear pore. Involved in innate immunity by regulating the production of interleukin-6 (IL6) downstream of Toll-like receptor (TLR): acts by bridging the NF-kappa-B inhibitor NFKBIZ and the SWI/SNF complex, leading to promote induction of IL6. Also involved in adaptive immunity by promoting B-cell activation. Involved in brain development: required for the survival and proliferation of cerebral cortical progenitor cells. Involved in myogenesis: required for skeletal muscle formation and skeletal development, possibly by regulating expression of muscle differentiation factors. The protein is Akirin-2 of Sus scrofa (Pig).